Reading from the N-terminus, the 845-residue chain is Protein SEY1 (845 aa).

A coiled-coil region spans residues 1 to 29 (MELNVDSAKQLLAEHEQELQSAHDAHSIL). The Cytoplasmic segment spans residues 1-749 (MELNVDSAKQ…KRATVSSIAQ (749 aa)). The GB1/RHD3-type G domain occupies 112 to 334 (GFGYDLCAVL…DPNFVFKTEY (223 aa)). 122–129 (GSQSTGKS) lines the GTP pocket. Residues 750 to 770 (VPLWMYGVMLVLGWNELMAIL) form a helical membrane-spanning segment. At 771-773 (SSP) the chain is on the lumenal side. The chain crosses the membrane as a helical span at residues 774–794 (VYFAFLLVLIASAYIVWRLNL). At 795-845 (SGPLISVLRAVANEVHRLADAQLRTHFSQPLREPRPPAESRPAEQIELEPN) the chain is on the cytoplasmic side. The interval 823–845 (QPLREPRPPAESRPAEQIELEPN) is disordered. A compositionally biased stretch (basic and acidic residues) spans 826–838 (REPRPPAESRPAE).

It belongs to the TRAFAC class dynamin-like GTPase superfamily. GB1/RHD3 GTPase family. RHD3 subfamily.

It localises to the endoplasmic reticulum membrane. In terms of biological role, cooperates with the reticulon proteins and tubule-shaping DP1 family proteins to generate and maintain the structure of the tubular endoplasmic reticulum network. Has GTPase activity, which is required for its function in ER organization. The protein is Protein SEY1 of Mycosarcoma maydis (Corn smut fungus).